A 181-amino-acid chain; its full sequence is Shikimate kinase (181 aa).

An ATP-binding site is contributed by 23 to 28; that stretch reads GTGKST. S27 lines the Mg(2+) pocket. D45, R69, and G91 together coordinate substrate. Position 129 (R129) interacts with ATP. A substrate-binding site is contributed by R148.

It belongs to the shikimate kinase family. As to quaternary structure, monomer. Mg(2+) serves as cofactor.

Its subcellular location is the cytoplasm. It catalyses the reaction shikimate + ATP = 3-phosphoshikimate + ADP + H(+). Its pathway is metabolic intermediate biosynthesis; chorismate biosynthesis; chorismate from D-erythrose 4-phosphate and phosphoenolpyruvate: step 5/7. Its function is as follows. Catalyzes the specific phosphorylation of the 3-hydroxyl group of shikimic acid using ATP as a cosubstrate. This Geobacter sulfurreducens (strain ATCC 51573 / DSM 12127 / PCA) protein is Shikimate kinase.